The following is a 232-amino-acid chain: MKERRAPQPVVVRCKLVLVGDVQCGKTAMLQVLAKDCYPETYVPTVFENYTACLETEEQRVELSLWDTSGSPYYDNVRPLCYSDSDAVLLCFDISRPETMDSALKKWRTEILDYCPSTRVLLIGCKTDLRTDLSTLMELSHQKQAPISYEQGCAIAKQLGAEIYLEGSAFTSETSIHSIFRTASMVCLNKSSPVPPKSPVRSLSKRLLHLPSRSELISTTFKKEKAKSCSIM.

GTP-binding positions include 23–28 (QCGKTA), 38–45 (YPETYVPT), 67–71 (DTSGS), 125–128 (CKTD), and 169–170 (AF). The Effector region signature appears at 42 to 50 (YVPTVFENY). Position 229 is a cysteine methyl ester (Cys-229). Cys-229 carries the S-geranylgeranyl cysteine lipid modification. Residues 230–232 (SIM) constitute a propeptide, removed in mature form.

The protein belongs to the small GTPase superfamily. Rho family. As to quaternary structure, binds GRB7 and PLXNB1. Interacts with PLXNA2. Interacts with UBXD5.

The protein resides in the cell membrane. It localises to the cytoplasm. It is found in the cytoskeleton. Functionally, lacks intrinsic GTPase activity. Has a low affinity for GDP, and constitutively binds GTP. Controls rearrangements of the actin cytoskeleton. Induces the Rac-dependent neuritic process formation in part by disruption of the cortical actin filaments. Causes the formation of many neuritic processes from the cell body with disruption of the cortical actin filaments. The chain is Rho-related GTP-binding protein Rho6 (Rnd1) from Mus musculus (Mouse).